Consider the following 159-residue polypeptide: Large ribosomal subunit protein uL15 (159 aa).

A compositionally biased stretch (basic and acidic residues) spans 1–13; it reads MRIHEVTPKEGST. The interval 1 to 51 is disordered; sequence MRIHEVTPKEGSTKRRRRVGRGISAGQGASCGFGMRGQKSRSGTGTKAGFE. Residues 23 to 35 are compositionally biased toward gly residues; that stretch reads ISAGQGASCGFGM.

This sequence belongs to the universal ribosomal protein uL15 family. In terms of assembly, part of the 50S ribosomal subunit.

Binds to the 23S rRNA. The sequence is that of Large ribosomal subunit protein uL15 from Rippkaea orientalis (strain PCC 8801 / RF-1) (Cyanothece sp. (strain PCC 8801)).